Reading from the N-terminus, the 129-residue chain is Phosphoribosyl-AMP cyclohydrolase (129 aa).

Residue aspartate 76 coordinates Mg(2+). Cysteine 77 is a Zn(2+) binding site. Mg(2+)-binding residues include aspartate 78 and aspartate 80. Cysteine 97 and cysteine 104 together coordinate Zn(2+).

It belongs to the PRA-CH family. As to quaternary structure, homodimer. Mg(2+) is required as a cofactor. Zn(2+) serves as cofactor.

It localises to the cytoplasm. The enzyme catalyses 1-(5-phospho-beta-D-ribosyl)-5'-AMP + H2O = 1-(5-phospho-beta-D-ribosyl)-5-[(5-phospho-beta-D-ribosylamino)methylideneamino]imidazole-4-carboxamide. It functions in the pathway amino-acid biosynthesis; L-histidine biosynthesis; L-histidine from 5-phospho-alpha-D-ribose 1-diphosphate: step 3/9. Functionally, catalyzes the hydrolysis of the adenine ring of phosphoribosyl-AMP. This is Phosphoribosyl-AMP cyclohydrolase from Methylibium petroleiphilum (strain ATCC BAA-1232 / LMG 22953 / PM1).